Reading from the N-terminus, the 82-residue chain is Delta-actitoxin-Aeq2b 2 (82 aa).

A signal peptide spans 1 to 19 (MNRLMILVFAAVFLALASA). Positions 20 to 26 (DEDVDIA) are excised as a propeptide. 3 disulfides stabilise this stretch: cysteine 32–cysteine 79, cysteine 34–cysteine 69, and cysteine 62–cysteine 80.

This sequence belongs to the sea anemone sodium channel inhibitory toxin family. Type I subfamily.

It localises to the secreted. It is found in the nematocyst. Binds specifically to voltage-gated sodium channels (Nav), thereby delaying their inactivation during signal transduction. Causes death to crabs. This chain is Delta-actitoxin-Aeq2b 2, found in Actinia equina (Beadlet anemone).